The sequence spans 143 residues: MRVLVQRVTSAQVTVDGEVVGRIEPNPQGLVALVGVTHGDDDATARALADKLWRLRILDGERSAADLGAPILVVSQFTLYADTAKGRRPSWSAAAPGPVAEPLVDAFAATLRELGATVATGRFGAHMHVELTNDGPVTLLLES.

A Gly-cisPro motif, important for rejection of L-amino acids motif is present at residues 135 to 136; sequence GP.

Belongs to the DTD family. As to quaternary structure, homodimer.

The protein resides in the cytoplasm. It carries out the reaction glycyl-tRNA(Ala) + H2O = tRNA(Ala) + glycine + H(+). The catalysed reaction is a D-aminoacyl-tRNA + H2O = a tRNA + a D-alpha-amino acid + H(+). An aminoacyl-tRNA editing enzyme that deacylates mischarged D-aminoacyl-tRNAs. Also deacylates mischarged glycyl-tRNA(Ala), protecting cells against glycine mischarging by AlaRS. Acts via tRNA-based rather than protein-based catalysis; rejects L-amino acids rather than detecting D-amino acids in the active site. By recycling D-aminoacyl-tRNA to D-amino acids and free tRNA molecules, this enzyme counteracts the toxicity associated with the formation of D-aminoacyl-tRNA entities in vivo and helps enforce protein L-homochirality. In Nocardia farcinica (strain IFM 10152), this protein is D-aminoacyl-tRNA deacylase.